We begin with the raw amino-acid sequence, 140 residues long: Large-conductance mechanosensitive channel (140 aa).

2 helical membrane passes run 11–31 and 82–102; these read FAMR…GAFG and GNFI…FLLV.

It belongs to the MscL family. In terms of assembly, homopentamer.

It is found in the cell inner membrane. In terms of biological role, channel that opens in response to stretch forces in the membrane lipid bilayer. May participate in the regulation of osmotic pressure changes within the cell. In Parabacteroides distasonis (strain ATCC 8503 / DSM 20701 / CIP 104284 / JCM 5825 / NCTC 11152), this protein is Large-conductance mechanosensitive channel.